The chain runs to 385 residues: 28S rRNA (uridine-N(3))-methyltransferase (385 aa).

2 disordered regions span residues 1 to 35 (MAER…KKKW) and 47 to 72 (QRAQ…NQGR). Basic and acidic residues-rich tracts occupy residues 15 to 35 (HGQR…KKKW) and 47 to 58 (QRAQEEEAKRQE). 4 residues coordinate S-adenosyl-L-methionine: arginine 293, glycine 313, asparagine 342, and threonine 343.

It belongs to the class IV-like SAM-binding methyltransferase superfamily. In terms of assembly, interacts with INCA1.

It is found in the cytoplasm. The protein localises to the cytoskeleton. Its subcellular location is the spindle. The protein resides in the chromosome. It localises to the centromere. It is found in the kinetochore. The protein localises to the microtubule organizing center. Its subcellular location is the centrosome. It catalyses the reaction uridine in 28S rRNA + S-adenosyl-L-methionine = N(3)-methyluridine in 28S rRNA + S-adenosyl-L-homocysteine + H(+). Its function is as follows. S-adenosyl-L-methionine-dependent methyltransferase that specifically methylates the N3 position of a uridine in 28S rRNA. Required for association of the centrosomes with the poles of the bipolar mitotic spindle during metaphase. Also involved in chromosome alignment. May promote centrosome maturation probably by recruiting A-kinase anchor protein AKAP9 to centrosomes in early mitosis. Binds specifically to miRNA MIR145 hairpin, regulates MIR145 expression at a postranscriptional level. The polypeptide is 28S rRNA (uridine-N(3))-methyltransferase (Mus musculus (Mouse)).